The following is a 218-amino-acid chain: Mediator of RNA polymerase II transcription subunit 20 (218 aa).

It belongs to the Mediator complex subunit 20 family. In terms of assembly, component of the Mediator complex.

The protein resides in the nucleus. Its function is as follows. Component of the Mediator complex, a coactivator involved in the regulated transcription of nearly all RNA polymerase II-dependent genes. Mediator functions as a bridge to convey information from gene-specific regulatory proteins to the basal RNA polymerase II transcription machinery. Mediator is recruited to promoters by direct interactions with regulatory proteins and serves as a scaffold for the assembly of a functional preinitiation complex with RNA polymerase II and the general transcription factors. The chain is Mediator of RNA polymerase II transcription subunit 20 (SRB2) from Yarrowia lipolytica (strain CLIB 122 / E 150) (Yeast).